Reading from the N-terminus, the 106-residue chain is Guanyl-specific ribonuclease Th1 (106 aa).

Disulfide bonds link Cys5-Cys103 and Cys23-Cys84. His39 is a catalytic residue. The Proton acceptor role is filled by Glu58. The active-site Proton donor is the His92.

Belongs to the ribonuclease N1/T1 family.

The enzyme catalyses [RNA] containing guanosine + H2O = an [RNA fragment]-3'-guanosine-3'-phosphate + a 5'-hydroxy-ribonucleotide-3'-[RNA fragment].. The sequence is that of Guanyl-specific ribonuclease Th1 from Trichoderma harzianum (Hypocrea lixii).